Reading from the N-terminus, the 183-residue chain is Small ribosomal subunit protein uS4c (183 aa).

The 62-residue stretch at 82-143 folds into the S4 RNA-binding domain; sequence MRLDNILFRL…KQRSKALIQN (62 aa).

This sequence belongs to the universal ribosomal protein uS4 family. In terms of assembly, part of the 30S ribosomal subunit. Contacts protein S5. The interaction surface between S4 and S5 is involved in control of translational fidelity.

The protein localises to the plastid. Its subcellular location is the chloroplast. One of the primary rRNA binding proteins, it binds directly to 16S rRNA where it nucleates assembly of the body of the 30S subunit. In terms of biological role, with S5 and S12 plays an important role in translational accuracy. The polypeptide is Small ribosomal subunit protein uS4c (rps4) (Freesia sp. (strain Lejeune 1997)).